A 36-amino-acid chain; its full sequence is Photosystem II reaction center protein Psb30 (36 aa).

A helical transmembrane segment spans residues 8-28; that stretch reads IIAQLTVVTLTLLAGPVIVFL.

It belongs to the Psb30/Ycf12 family. PSII is composed of 1 copy each of membrane proteins PsbA, PsbB, PsbC, PsbD, PsbE, PsbF, PsbH, PsbI, PsbJ, PsbK, PsbL, PsbM, PsbT, PsbX, PsbY, PsbZ, Psb30/Ycf12, peripheral proteins of the oxygen-evolving complex and a large number of cofactors. It forms dimeric complexes.

It is found in the plastid. Its subcellular location is the cyanelle thylakoid membrane. Functionally, a core subunit of photosystem II (PSII), probably helps stabilize the reaction center. In Cyanophora paradoxa, this protein is Photosystem II reaction center protein Psb30.